A 577-amino-acid polypeptide reads, in one-letter code: F-box/TPR repeat protein pof3 (577 aa).

TPR repeat units lie at residues 6–39 (VKAIKEKTQQYLSKRKFEDALTFITKTIEQEPNP), 41–74 (IDLFELRAQVYEKSGQYSQAELDAKRMIHLNARN), and 76–108 (RGYLRLGKLLQLDGFDKKADQLYTQGLRMVHKM). Residues 138–180 (ILPREVLLCILQQLNFKSIVQCMQVCKHWRDCIKKEPSLFCCL) form the F-box domain.

As to quaternary structure, a part of the E3 ubiquitin ligase Skp1-Cullin-1-F-box (SCF) complex. Interacts with cul1, mcl1 and skp1.

Its subcellular location is the mitochondrion. The protein resides in the nucleus. Has a role in substrate recognition in the Skp1-Cullin-1/Cdc53-F-box (SCF) ubiquitin ligase complex. Required for the maintenance of telomere length and transcriptional silencing at the telomere. Also required for chromosome segregation. The protein is F-box/TPR repeat protein pof3 (pof3) of Schizosaccharomyces pombe (strain 972 / ATCC 24843) (Fission yeast).